The following is a 469-amino-acid chain: Glutamate--tRNA ligase 1 (469 aa).

Residues proline 10 to glycine 20 carry the 'HIGH' region motif. Zn(2+)-binding residues include cysteine 99, cysteine 101, cysteine 126, and aspartate 128. Positions arginine 237–arginine 241 match the 'KMSKS' region motif. Lysine 240 contributes to the ATP binding site.

Belongs to the class-I aminoacyl-tRNA synthetase family. Glutamate--tRNA ligase type 1 subfamily. In terms of assembly, monomer. The cofactor is Zn(2+).

The protein resides in the cytoplasm. It catalyses the reaction tRNA(Glu) + L-glutamate + ATP = L-glutamyl-tRNA(Glu) + AMP + diphosphate. Catalyzes the attachment of glutamate to tRNA(Glu) in a two-step reaction: glutamate is first activated by ATP to form Glu-AMP and then transferred to the acceptor end of tRNA(Glu). The chain is Glutamate--tRNA ligase 1 from Coxiella burnetii (strain RSA 331 / Henzerling II).